Here is a 244-residue protein sequence, read N- to C-terminus: Lectin (244 aa).

The tract at residues 1–20 is disordered; it reads TETETTSFSIPKTDQPSSPK.

It belongs to the leguminous lectin family. In terms of assembly, homodimer. In contrast to other Lathyrus lectins which are tetramer of two alpha and two beta chains.

The sequence is that of Lectin from Lathyrus sphaericus (Spring vetchling).